Reading from the N-terminus, the 1476-residue chain is ABC transporter G family member 17 (1476 aa).

Disordered regions lie at residues 13–45 (SENNNNNNNNNNNNNNNNNNNLNNNNDNDYDYD) and 68–91 (FREIDGGKNNNNHDIELGERKPEN). A coiled-coil region spans residues 14-67 (ENNNNNNNNNNNNNNNNNNNLNNNNDNDYDYDSINNIEEKFENVSKELEGQSIK). Residues 15–39 (NNNNNNNNNNNNNNNNNNNLNNNND) show a composition bias toward low complexity. In terms of domain architecture, ABC transporter 1 spans 151 to 402 (LNPFNYFKKD…FLDLGFDCEP (252 aa)). Residues 507–751 (WGDKFTLTSR…SLSVKGENYL (245 aa)) enclose the ABC transmembrane type-2 1 domain. Helical transmembrane passes span 517–537 (FLTILVLSFIFGGIYFQQPLT), 547–567 (AIFTSIIFNCILTQGELHGAL), 592–612 (ILIDIPFILVQVFLHSFIVYF), 623–643 (FFIFCFTLVGVSLSSASLFRG), and 764–784 (LNVVVIFLFWLFYIGLNLFAV). One can recognise an ABC transporter 2 domain in the interval 838–1082 (FSWKSISYTV…LTSYFERHGV (245 aa)). 874–881 (GSSGAGKT) is an ATP binding site. Transmembrane regions (helical) follow at residues 1182-1202 (FYTMGSFAQSAVSGLVIGFTF), 1219-1239 (SWEAMILGVLLIYLVLPMFFI), 1260-1280 (LSMIAVEIPYVVLSSTLFFIA), 1298-1318 (WLMHTMFSVYIVSFAQALGAA), 1322-1342 (IAISIAALPIVLFYLFLLCGV), and 1450-1470 (FGIIVAYWGSSILAVLFFVYL). One can recognise an ABC transmembrane type-2 2 domain in the interval 1182–1405 (FYTMGSFAQS…TDCQTYSAPF (224 aa)).

It belongs to the ABC transporter superfamily. ABCG family. PDR (TC 3.A.1.205) subfamily.

It localises to the membrane. This Dictyostelium discoideum (Social amoeba) protein is ABC transporter G family member 17 (abcG17-1).